Reading from the N-terminus, the 317-residue chain is 17-beta-hydroxysteroid dehydrogenase type 6 (317 aa).

A signal peptide spans 1-17; it reads MWLYLAAFVGLYYLLHW. An NAD(+)-binding site is contributed by 33–57; sequence FITGCDSGFGNLLARQLDARGLRVL. Asn161 is a glycosylation site (N-linked (GlcNAc...) asparagine). Ser164 lines the substrate pocket. Residue Tyr176 is the Proton acceptor of the active site. N-linked (GlcNAc...) asparagine glycans are attached at residues Asn215 and Asn256.

The protein belongs to the short-chain dehydrogenases/reductases (SDR) family. In terms of tissue distribution, detected in liver and prostate (at protein level). Detected in adult liver, lung, brain, placenta, prostate, adrenal gland, testis, mammary gland, spleen, spinal cord and uterus. Detected in caudate nucleus, and at lower levels in amygdala, corpus callosum, hippocampus, substantia nigra and thalamus. Detected in fetal lung, liver and brain.

It is found in the microsome membrane. The protein resides in the early endosome membrane. The catalysed reaction is all-trans-retinol--[retinol-binding protein] + NAD(+) = all-trans-retinal--[retinol-binding protein] + NADH + H(+). It carries out the reaction all-trans-retinol + NAD(+) = all-trans-retinal + NADH + H(+). It catalyses the reaction androsterone + NAD(+) = 5alpha-androstan-3,17-dione + NADH + H(+). The enzyme catalyses testosterone + NAD(+) = androst-4-ene-3,17-dione + NADH + H(+). The catalysed reaction is 5alpha-androstane-3alpha,17beta-diol + NAD(+) = 17beta-hydroxy-5alpha-androstan-3-one + NADH + H(+). It carries out the reaction 17beta-estradiol + NAD(+) = estrone + NADH + H(+). It catalyses the reaction 17beta-estradiol + NADP(+) = estrone + NADPH + H(+). The enzyme catalyses 3alpha-hydroxy-5alpha-pregnan-20-one + NAD(+) = 5alpha-pregnane-3,20-dione + NADH + H(+). The catalysed reaction is 5alpha-androstane-3beta,17beta-diol + NAD(+) = 17beta-hydroxy-5alpha-androstan-3-one + NADH + H(+). It carries out the reaction 3beta-hydroxy-5alpha-androstan-17-one + NAD(+) = 5alpha-androstan-3,17-dione + NADH + H(+). Its function is as follows. NAD-dependent oxidoreductase with broad substrate specificity that shows both oxidative and reductive activity (in vitro). Has 17-beta-hydroxysteroid dehydrogenase activity towards various steroids (in vitro). Converts 5-alpha-androstan-3-alpha,17-beta-diol to androsterone and estradiol to estrone (in vitro). Has 3-alpha-hydroxysteroid dehydrogenase activity towards androsterone (in vitro). Has retinol dehydrogenase activity towards all-trans-retinol (in vitro). Can convert androsterone to epi-androsterone. Androsterone is first oxidized to 5-alpha-androstane-3,17-dione and then reduced to epi-andosterone. Can act on both C-19 and C-21 3-alpha-hydroxysteroids. The sequence is that of 17-beta-hydroxysteroid dehydrogenase type 6 (HSD17B6) from Homo sapiens (Human).